The primary structure comprises 293 residues: Acetylglutamate kinase (293 aa).

Substrate contacts are provided by residues 71–72 (GG), Arg93, and Asn186.

It belongs to the acetylglutamate kinase family. ArgB subfamily.

It localises to the cytoplasm. It carries out the reaction N-acetyl-L-glutamate + ATP = N-acetyl-L-glutamyl 5-phosphate + ADP. It functions in the pathway amino-acid biosynthesis; L-arginine biosynthesis; N(2)-acetyl-L-ornithine from L-glutamate: step 2/4. In terms of biological role, catalyzes the ATP-dependent phosphorylation of N-acetyl-L-glutamate. This Synechococcus sp. (strain WH7803) protein is Acetylglutamate kinase.